Reading from the N-terminus, the 392-residue chain is Phosphoglycerate kinase (392 aa).

Substrate-binding positions include 21 to 23 (DFN), Arg36, 59 to 62 (HLGR), Arg118, and Arg151. Residues Lys201, Gly292, Glu323, and 349-352 (GGDS) each bind ATP.

This sequence belongs to the phosphoglycerate kinase family. As to quaternary structure, monomer.

It is found in the cytoplasm. It catalyses the reaction (2R)-3-phosphoglycerate + ATP = (2R)-3-phospho-glyceroyl phosphate + ADP. The protein operates within carbohydrate degradation; glycolysis; pyruvate from D-glyceraldehyde 3-phosphate: step 2/5. This chain is Phosphoglycerate kinase, found in Borrelia turicatae (strain 91E135).